We begin with the raw amino-acid sequence, 387 residues long: GTPase Obg (387 aa).

The 159-residue stretch at 1–159 folds into the Obg domain; sequence MKFVDEAIIR…RSLKLELLLL (159 aa). Residues 160–333 enclose the OBG-type G domain; it reads ADVGLLGMPN…LALKLLDFID (174 aa). GTP-binding positions include 166–173, 191–195, 213–216, 283–286, and 314–316; these read GMPNAGKS, FTTLV, DIPG, NKAD, and SAY. 2 residues coordinate Mg(2+): serine 173 and threonine 193.

It belongs to the TRAFAC class OBG-HflX-like GTPase superfamily. OBG GTPase family. As to quaternary structure, monomer. Requires Mg(2+) as cofactor.

Its subcellular location is the cytoplasm. Functionally, an essential GTPase which binds GTP, GDP and possibly (p)ppGpp with moderate affinity, with high nucleotide exchange rates and a fairly low GTP hydrolysis rate. Plays a role in control of the cell cycle, stress response, ribosome biogenesis and in those bacteria that undergo differentiation, in morphogenesis control. The sequence is that of GTPase Obg from Shewanella pealeana (strain ATCC 700345 / ANG-SQ1).